Here is a 553-residue protein sequence, read N- to C-terminus: MVEDLAASYVTLKLENEILQAQVKRLMEENAALQAQIPELQKSGAVKEHEPLRKPSEAQEPPESPEFPAARESQNPWEPPATTEPGEPTKIREPREPSAISELREPPEIKEPQEPPETNESGESSAITEFRGSPEIKEPHLPPKSKEYWGPQELPMVKESWEPPEALDSTAWKPPAVKESQEIQKALESPATQRPQASPRGYDLPAVCEAEPTDNQGTPALKELQSPQLHNPTNDEESQTVPEYQETSSQLEPLEHPPPQETLEPRVPQEPLDPSDAEEFLELSVPEESLEGLIVARTGTEQAQCELEATTLPLEYPLAFSEDFQKLSEFLVQLTSYLRSRGYPTEAALVSFVGSFFSGEAGRMFQPLLDSQPPLVEQFERLLRALQDTFDNPESLEVANQGLPQLRQGEGLAPRYSTRFHLIAQELDLGESTLCIQFQEELASSIQNELSCTSPATNLSDVIIECVTLEEKASGGVDSSSSSSEEENGSEGPPTENQPVQATSNRPHLSEAERARRREGHLCLYCGHPGHFARDCPVKPHRVQQAGNMEARR.

Positions 2–43 (VEDLAASYVTLKLENEILQAQVKRLMEENAALQAQIPELQKS) form a coiled coil. Disordered stretches follow at residues 38 to 274 (PELQ…PLDP) and 474 to 514 (SGGV…EAER). Over residues 45-57 (AVKEHEPLRKPSE) the composition is skewed to basic and acidic residues. The span at 58 to 73 (AQEPPESPEFPAARES) shows a compositional bias: low complexity. Over residues 87–113 (EPTKIREPREPSAISELREPPEIKEPQ) the composition is skewed to basic and acidic residues. Over residues 118-127 (TNESGESSAI) the composition is skewed to polar residues. Residues 132-147 (GSPEIKEPHLPPKSKE) are compositionally biased toward basic and acidic residues. Over residues 239 to 250 (QTVPEYQETSSQ) the composition is skewed to polar residues. Positions 474 to 483 (SGGVDSSSSS) are enriched in low complexity. The segment covering 495-507 (TENQPVQATSNRP) has biased composition (polar residues). A CCHC-type zinc finger spans residues 523–537 (CLYCGHPGHFARDCP).

In terms of tissue distribution, expressed in embryonic myogenic progenitor cells, not expressed in adult and aged satellite cells.

It is found in the nucleus. Functionally, may function as a transcriptional regulator. Plays a role in postnatal myogenesis, may be involved in the regulation of satellite cells self-renewal. This chain is Retrotransposon Gag-like protein 3, found in Mus musculus (Mouse).